Here is a 364-residue protein sequence, read N- to C-terminus: Phosphoserine aminotransferase (364 aa).

Arg-41 provides a ligand contact to L-glutamate. Residues 75 to 76 (AS), Trp-100, Thr-155, Asp-175, and Gln-198 each bind pyridoxal 5'-phosphate. Position 199 is an N6-(pyridoxal phosphate)lysine (Lys-199). Residue 239–240 (NT) participates in pyridoxal 5'-phosphate binding.

It belongs to the class-V pyridoxal-phosphate-dependent aminotransferase family. SerC subfamily. In terms of assembly, homodimer. It depends on pyridoxal 5'-phosphate as a cofactor.

It localises to the cytoplasm. The enzyme catalyses O-phospho-L-serine + 2-oxoglutarate = 3-phosphooxypyruvate + L-glutamate. It carries out the reaction 4-(phosphooxy)-L-threonine + 2-oxoglutarate = (R)-3-hydroxy-2-oxo-4-phosphooxybutanoate + L-glutamate. It functions in the pathway amino-acid biosynthesis; L-serine biosynthesis; L-serine from 3-phospho-D-glycerate: step 2/3. Its function is as follows. Catalyzes the reversible conversion of 3-phosphohydroxypyruvate to phosphoserine and of 3-hydroxy-2-oxo-4-phosphonooxybutanoate to phosphohydroxythreonine. This Streptococcus thermophilus (strain CNRZ 1066) protein is Phosphoserine aminotransferase.